The primary structure comprises 311 residues: Acetyl-coenzyme A carboxylase carboxyl transferase subunit alpha (311 aa).

One can recognise a CoA carboxyltransferase C-terminal domain in the interval 34-286; it reads EKDLQKEASK…KEYYLQNIRE (253 aa).

It belongs to the AccA family. Acetyl-CoA carboxylase is a heterohexamer composed of biotin carboxyl carrier protein (AccB), biotin carboxylase (AccC) and two subunits each of ACCase subunit alpha (AccA) and ACCase subunit beta (AccD).

It localises to the cytoplasm. The enzyme catalyses N(6)-carboxybiotinyl-L-lysyl-[protein] + acetyl-CoA = N(6)-biotinyl-L-lysyl-[protein] + malonyl-CoA. It participates in lipid metabolism; malonyl-CoA biosynthesis; malonyl-CoA from acetyl-CoA: step 1/1. In terms of biological role, component of the acetyl coenzyme A carboxylase (ACC) complex. First, biotin carboxylase catalyzes the carboxylation of biotin on its carrier protein (BCCP) and then the CO(2) group is transferred by the carboxyltransferase to acetyl-CoA to form malonyl-CoA. This chain is Acetyl-coenzyme A carboxylase carboxyl transferase subunit alpha, found in Nitratiruptor sp. (strain SB155-2).